A 416-amino-acid chain; its full sequence is MRSWTSPALAPLPASGLPLRLHDTRTGRITPVVPLTPGTARLYVCGITPYDSTHLGHAATYHAADLMRRALRDSGLAVEMAQNVTDVDDPLLERADRDGVDWRELAASQSALFAEDMEALRVIAPETYRSVSEAMDEIIAVVLALHARGRAYPVEAADAAGPDWYLDLAADGALGDVSGWSEEQMLAVFAERGGDPDREGKRGRFDPLLWSAEREGEPAWDAGVLGRGRPGWHVECVCIAEEGIGLPFDVQAGGSDLIFPHHDLSAAHSVALGRPFAAAYAHSGMVGYQGEKMSKSLGNLVFVHRLVREGTDPMVIRLVLMAHHYRSDWEWTDGELDRAAERLKSYRLAARRGDHRPATVEALRAALRDDLDTVRALEALDAWAEGGSSSGAETDPAAPGDVPTAMDALFGITLQS.

Cys45 contributes to the Zn(2+) binding site. L-cysteinyl-5'-AMP-binding positions include 45–48 (CGIT), Thr60, and 83–85 (NVT). The 'HIGH' region signature appears at 47–57 (ITPYDSTHLGH). The 'ERGGDP' region signature appears at 191–196 (ERGGDP). Residue Trp232 participates in L-cysteinyl-5'-AMP binding. Cys236 provides a ligand contact to Zn(2+). Position 254–256 (254–256 (GSD)) interacts with L-cysteinyl-5'-AMP. His261 is a Zn(2+) binding site. Val286 contacts L-cysteinyl-5'-AMP. The 'KMSKS' region signature appears at 292–296 (KMSKS).

This sequence belongs to the class-I aminoacyl-tRNA synthetase family. MshC subfamily. In terms of assembly, monomer. Zn(2+) serves as cofactor.

The enzyme catalyses 1D-myo-inositol 2-amino-2-deoxy-alpha-D-glucopyranoside + L-cysteine + ATP = 1D-myo-inositol 2-(L-cysteinylamino)-2-deoxy-alpha-D-glucopyranoside + AMP + diphosphate + H(+). Its function is as follows. Catalyzes the ATP-dependent condensation of GlcN-Ins and L-cysteine to form L-Cys-GlcN-Ins. The sequence is that of L-cysteine:1D-myo-inositol 2-amino-2-deoxy-alpha-D-glucopyranoside ligase from Brachybacterium faecium (strain ATCC 43885 / DSM 4810 / JCM 11609 / LMG 19847 / NBRC 14762 / NCIMB 9860 / 6-10).